The sequence spans 342 residues: S-adenosylmethionine:tRNA ribosyltransferase-isomerase (342 aa).

The protein belongs to the QueA family. In terms of assembly, monomer.

It is found in the cytoplasm. It carries out the reaction 7-aminomethyl-7-carbaguanosine(34) in tRNA + S-adenosyl-L-methionine = epoxyqueuosine(34) in tRNA + adenine + L-methionine + 2 H(+). Its pathway is tRNA modification; tRNA-queuosine biosynthesis. In terms of biological role, transfers and isomerizes the ribose moiety from AdoMet to the 7-aminomethyl group of 7-deazaguanine (preQ1-tRNA) to give epoxyqueuosine (oQ-tRNA). In Shouchella clausii (strain KSM-K16) (Alkalihalobacillus clausii), this protein is S-adenosylmethionine:tRNA ribosyltransferase-isomerase.